Reading from the N-terminus, the 59-residue chain is Large ribosomal subunit protein bL32c (59 aa).

The interval 37-59 (SRSFSRGNEHPKPKGFSGQQANK) is disordered.

Belongs to the bacterial ribosomal protein bL32 family.

Its subcellular location is the plastid. The protein resides in the chloroplast. This chain is Large ribosomal subunit protein bL32c (rpl32), found in Zea mays (Maize).